The chain runs to 480 residues: Adenosylhomocysteinase (480 aa).

Substrate contacts are provided by threonine 63, aspartate 142, and glutamate 203. An NAD(+)-binding site is contributed by 204–206 (TTT). Substrate contacts are provided by lysine 233 and aspartate 237. Residues asparagine 238, 267–272 (GYGDVG), glutamate 290, asparagine 325, 346–348 (IGH), and asparagine 394 contribute to the NAD(+) site.

This sequence belongs to the adenosylhomocysteinase family. NAD(+) is required as a cofactor.

The protein localises to the cytoplasm. It catalyses the reaction S-adenosyl-L-homocysteine + H2O = L-homocysteine + adenosine. It functions in the pathway amino-acid biosynthesis; L-homocysteine biosynthesis; L-homocysteine from S-adenosyl-L-homocysteine: step 1/1. May play a key role in the regulation of the intracellular concentration of adenosylhomocysteine. The protein is Adenosylhomocysteinase of Xanthomonas oryzae pv. oryzae (strain PXO99A).